The primary structure comprises 78 residues: Magnetosome protein MamL (78 aa).

The first 22 residues, 1–22 (MVRVIGSLVFGGLILLLASSNA), serve as a signal peptide directing secretion. Residues 23 to 38 (HMVETRFGPLIMLAPH) are Lumenal-facing. The chain crosses the membrane as a helical span at residues 39 to 59 (FVVLGITFFLGFAIGIVLVFA). The Cytoplasmic portion of the chain corresponds to 60–78 (NVMKRRKHKLPGKNIVIKR).

The protein belongs to the magnetosome MamL family.

Its subcellular location is the magnetosome membrane. Functionally, involved in magnetite crystal maturation, but not in magnetosome vesicle tubulation or formation. One of 7 genes (mamLQBIEMO) able to induce magnetosome membrane biogenesis; coexpression of mamLQRBIEMO in a deletion of the 17 gene mamAB operon restores magnetosome vesicle formation but not magnetite biosynthesis. This Magnetospirillum gryphiswaldense (strain DSM 6361 / JCM 21280 / NBRC 15271 / MSR-1) protein is Magnetosome protein MamL.